A 348-amino-acid chain; its full sequence is Uroporphyrinogen decarboxylase (348 aa).

Residues 27–31 (RQAGR), Phe46, Asp76, Tyr152, Ser207, and His320 contribute to the substrate site.

Belongs to the uroporphyrinogen decarboxylase family. As to quaternary structure, homodimer.

The protein localises to the cytoplasm. The catalysed reaction is uroporphyrinogen III + 4 H(+) = coproporphyrinogen III + 4 CO2. Its pathway is porphyrin-containing compound metabolism; protoporphyrin-IX biosynthesis; coproporphyrinogen-III from 5-aminolevulinate: step 4/4. Functionally, catalyzes the decarboxylation of four acetate groups of uroporphyrinogen-III to yield coproporphyrinogen-III. This chain is Uroporphyrinogen decarboxylase, found in Bacillus anthracis.